The sequence spans 26 residues: Omega-conotoxin CVIC (26 aa).

3 disulfides stabilise this stretch: Cys-1/Cys-16, Cys-8/Cys-20, and Cys-15/Cys-26. The residue at position 26 (Cys-26) is a Cysteine amide.

The protein belongs to the conotoxin O1 superfamily. Expressed by the venom duct.

It localises to the secreted. Functionally, omega-conotoxins act at presynaptic membranes, they bind and block voltage-gated calcium channels (Cav). This toxin blocks N-, P- and Q-type calcium channels. This is Omega-conotoxin CVIC from Conus catus (Cat cone).